A 324-amino-acid chain; its full sequence is Methenyltetrahydromethanopterin cyclohydrolase (324 aa).

The protein belongs to the MCH family.

The protein resides in the cytoplasm. The enzyme catalyses 5,10-methenyl-5,6,7,8-tetrahydromethanopterin + H2O = N(5)-formyl-5,6,7,8-tetrahydromethanopterin + H(+). It functions in the pathway one-carbon metabolism; methanogenesis from CO(2); 5,10-methenyl-5,6,7,8-tetrahydromethanopterin from CO(2): step 3/3. Catalyzes the reversible interconversion of 5-formyl-H(4)MPT to methenyl-H(4)MPT(+). In Methanococcus aeolicus (strain ATCC BAA-1280 / DSM 17508 / OCM 812 / Nankai-3), this protein is Methenyltetrahydromethanopterin cyclohydrolase.